A 102-amino-acid polypeptide reads, in one-letter code: Large ribosomal subunit protein bL21 (102 aa).

It belongs to the bacterial ribosomal protein bL21 family. As to quaternary structure, part of the 50S ribosomal subunit. Contacts protein L20.

This protein binds to 23S rRNA in the presence of protein L20. In Levilactobacillus brevis (strain ATCC 367 / BCRC 12310 / CIP 105137 / JCM 1170 / LMG 11437 / NCIMB 947 / NCTC 947) (Lactobacillus brevis), this protein is Large ribosomal subunit protein bL21.